Consider the following 575-residue polypeptide: 4-substituted benzoates-glutamate ligase GH3.12 (575 aa).

The stretch at 6–33 (DINETFEKQLKDLTSNVKSIQDNLLEEI) forms a coiled coil. 95–96 (SS) is a binding site for AMP. 120–123 (YDLR) lines the salicylate pocket. Residues T301, T324, S328, Y347, D398, and R417 each coordinate AMP.

This sequence belongs to the IAA-amido conjugating enzyme family. In terms of assembly, interacts with the P.syringae pv. maculicola effector HopW1-1 (via C-terminus). In terms of tissue distribution, expressed in seedlings, mostly in cotyledons, leaves, hypocotyls and sporadically in roots. Not detected in unchallenged adult plants, except in flowers.

Specifically and reversibly inhibited by salicylic acid (SA). Catalyzes the conjugation of specific amino acids (e.g. Glu and possibly His, Lys, and Met) to their preferred acyl substrates (e.g. 4-substituted benzoates), in a magnesium ion- and ATP-dependent manner. Can use 4-substituted benzoates such as 4-aminobenzoate (pABA), 4-fluorobenzoate and 4-hydroxybenzoate (4-HBA), and, to a lesser extent, benzoate, vanillate and trans-cinnamate, but not 2-substituted benzoates and salicylic acid (SA), as conjugating acyl substrates. Involved in both basal and induced resistance in a SA-dependent manner. Confers resistance to virulent and avirulent pathogens (at least bacteria and oomycetes), and promotes SA glucosides accumulation. Required for the establishment of hyper-sensitive response (HR) upon incompatible interaction and subsequent systemic acquired resistance (SAR). This chain is 4-substituted benzoates-glutamate ligase GH3.12 (GH3.12), found in Arabidopsis thaliana (Mouse-ear cress).